The primary structure comprises 427 residues: Tryptophan synthase beta chain 1 (427 aa).

At Lys107 the chain carries N6-(pyridoxal phosphate)lysine.

This sequence belongs to the TrpB family. Tetramer of two alpha and two beta chains. The cofactor is pyridoxal 5'-phosphate.

The enzyme catalyses (1S,2R)-1-C-(indol-3-yl)glycerol 3-phosphate + L-serine = D-glyceraldehyde 3-phosphate + L-tryptophan + H2O. The protein operates within amino-acid biosynthesis; L-tryptophan biosynthesis; L-tryptophan from chorismate: step 5/5. In terms of biological role, the beta subunit is responsible for the synthesis of L-tryptophan from indole and L-serine. This is Tryptophan synthase beta chain 1 (trpB1) from Aeropyrum pernix (strain ATCC 700893 / DSM 11879 / JCM 9820 / NBRC 100138 / K1).